The following is a 246-amino-acid chain: DNA repair protein RecO (246 aa).

This sequence belongs to the RecO family.

In terms of biological role, involved in DNA repair and RecF pathway recombination. The sequence is that of DNA repair protein RecO from Nitrosococcus oceani (strain ATCC 19707 / BCRC 17464 / JCM 30415 / NCIMB 11848 / C-107).